The sequence spans 419 residues: Gamma-glutamyl phosphate reductase (419 aa).

The protein belongs to the gamma-glutamyl phosphate reductase family.

It is found in the cytoplasm. It carries out the reaction L-glutamate 5-semialdehyde + phosphate + NADP(+) = L-glutamyl 5-phosphate + NADPH + H(+). The protein operates within amino-acid biosynthesis; L-proline biosynthesis; L-glutamate 5-semialdehyde from L-glutamate: step 2/2. Its function is as follows. Catalyzes the NADPH-dependent reduction of L-glutamate 5-phosphate into L-glutamate 5-semialdehyde and phosphate. The product spontaneously undergoes cyclization to form 1-pyrroline-5-carboxylate. In Marinomonas sp. (strain MWYL1), this protein is Gamma-glutamyl phosphate reductase.